A 202-amino-acid chain; its full sequence is LexA repressor (202 aa).

Positions 28–48 (RAEIAQQLGFRSPNAAEEHLK) form a DNA-binding region, H-T-H motif. Active-site for autocatalytic cleavage activity residues include Ser-119 and Lys-156.

Belongs to the peptidase S24 family. As to quaternary structure, homodimer.

The catalysed reaction is Hydrolysis of Ala-|-Gly bond in repressor LexA.. Represses a number of genes involved in the response to DNA damage (SOS response), including recA and lexA. Binds to the 16 bp palindromic sequence 5'-CTGTATATATATACAG-3'. In the presence of single-stranded DNA, RecA interacts with LexA causing an autocatalytic cleavage which disrupts the DNA-binding part of LexA, leading to derepression of the SOS regulon and eventually DNA repair. The protein is LexA repressor of Pectobacterium carotovorum subsp. carotovorum (strain PC1).